Reading from the N-terminus, the 466-residue chain is Asparagine--tRNA ligase (466 aa).

The protein belongs to the class-II aminoacyl-tRNA synthetase family. As to quaternary structure, homodimer.

It localises to the cytoplasm. The catalysed reaction is tRNA(Asn) + L-asparagine + ATP = L-asparaginyl-tRNA(Asn) + AMP + diphosphate + H(+). The chain is Asparagine--tRNA ligase from Photobacterium profundum (strain SS9).